The following is a 320-amino-acid chain: Cyclin-H (320 aa).

Ser-5 bears the Phosphoserine; by CDK8 mark. Ser-132 carries the phosphoserine modification. Ser-304 bears the Phosphoserine; by CDK8 mark.

This sequence belongs to the cyclin family. Cyclin C subfamily. In terms of assembly, associates primarily with CDK7 and MAT1 to form the CAK complex. CAK can further associate with the core-TFIIH to form the TFIIH basal transcription factor.

The protein resides in the nucleus. Its function is as follows. Regulates CDK7, the catalytic subunit of the CDK-activating kinase (CAK) enzymatic complex. CAK activates the cyclin-associated kinases CDK1, CDK2, CDK4 and CDK6 by threonine phosphorylation. CAK complexed to the core-TFIIH basal transcription factor activates RNA polymerase II by serine phosphorylation of the repetitive C-terminal domain (CTD) of its large subunit (POLR2A), allowing its escape from the promoter and elongation of the transcripts. Involved in cell cycle control and in RNA transcription by RNA polymerase II. Its expression and activity are constant throughout the cell cycle. In Bos taurus (Bovine), this protein is Cyclin-H (CCNH).